The primary structure comprises 677 residues: Methionine--tRNA ligase (677 aa).

A 'HIGH' region motif is present at residues 15–25 (PYANGSIHLGH). Residues Cys-146, Cys-149, Cys-159, and Cys-162 each coordinate Zn(2+). The 'KMSKS' region signature appears at 333–337 (KMSKS). Residue Lys-336 coordinates ATP. Residues 575–677 (DFAKVDLRVA…DGAKPGQQVK (103 aa)) enclose the tRNA-binding domain.

This sequence belongs to the class-I aminoacyl-tRNA synthetase family. MetG type 1 subfamily. As to quaternary structure, homodimer. The cofactor is Zn(2+).

The protein localises to the cytoplasm. It catalyses the reaction tRNA(Met) + L-methionine + ATP = L-methionyl-tRNA(Met) + AMP + diphosphate. Its function is as follows. Is required not only for elongation of protein synthesis but also for the initiation of all mRNA translation through initiator tRNA(fMet) aminoacylation. The protein is Methionine--tRNA ligase of Klebsiella pneumoniae (strain 342).